A 500-amino-acid polypeptide reads, in one-letter code: Probable malate:quinone oxidoreductase (500 aa).

The protein belongs to the MQO family. The cofactor is FAD.

It catalyses the reaction (S)-malate + a quinone = a quinol + oxaloacetate. It functions in the pathway carbohydrate metabolism; tricarboxylic acid cycle; oxaloacetate from (S)-malate (quinone route): step 1/1. The protein is Probable malate:quinone oxidoreductase of Corynebacterium aurimucosum (strain ATCC 700975 / DSM 44827 / CIP 107346 / CN-1) (Corynebacterium nigricans).